The chain runs to 169 residues: uncharacterized protein (169 aa).

The protein to M.tuberculosis Rv1480.

This is an uncharacterized protein from Mycobacterium avium.